We begin with the raw amino-acid sequence, 387 residues long: 8-amino-7-oxononanoate synthase (387 aa).

Arg-19 is a binding site for substrate. 106 to 107 is a binding site for pyridoxal 5'-phosphate; sequence GY. His-131 contacts substrate. Positions 177, 205, and 236 each coordinate pyridoxal 5'-phosphate. Lys-239 is subject to N6-(pyridoxal phosphate)lysine. Thr-353 contributes to the substrate binding site.

The protein belongs to the class-II pyridoxal-phosphate-dependent aminotransferase family. BioF subfamily. Homodimer. It depends on pyridoxal 5'-phosphate as a cofactor.

The enzyme catalyses 6-carboxyhexanoyl-[ACP] + L-alanine + H(+) = (8S)-8-amino-7-oxononanoate + holo-[ACP] + CO2. It functions in the pathway cofactor biosynthesis; biotin biosynthesis. In terms of biological role, catalyzes the decarboxylative condensation of pimeloyl-[acyl-carrier protein] and L-alanine to produce 8-amino-7-oxononanoate (AON), [acyl-carrier protein], and carbon dioxide. The protein is 8-amino-7-oxononanoate synthase of Nitrosomonas europaea (strain ATCC 19718 / CIP 103999 / KCTC 2705 / NBRC 14298).